We begin with the raw amino-acid sequence, 250 residues long: 4-hydroxy-tetrahydrodipicolinate reductase (250 aa).

Residues 9-14, 79-81, and 103-106 contribute to the NAD(+) site; these read GATGKM, GTT, and SANM. His135 serves as the catalytic Proton donor/acceptor. His136 provides a ligand contact to (S)-2,3,4,5-tetrahydrodipicolinate. The Proton donor role is filled by Lys139. 145–146 lines the (S)-2,3,4,5-tetrahydrodipicolinate pocket; sequence GT.

Belongs to the DapB family.

The protein resides in the cytoplasm. The catalysed reaction is (S)-2,3,4,5-tetrahydrodipicolinate + NAD(+) + H2O = (2S,4S)-4-hydroxy-2,3,4,5-tetrahydrodipicolinate + NADH + H(+). It carries out the reaction (S)-2,3,4,5-tetrahydrodipicolinate + NADP(+) + H2O = (2S,4S)-4-hydroxy-2,3,4,5-tetrahydrodipicolinate + NADPH + H(+). Its pathway is amino-acid biosynthesis; L-lysine biosynthesis via DAP pathway; (S)-tetrahydrodipicolinate from L-aspartate: step 4/4. Functionally, catalyzes the conversion of 4-hydroxy-tetrahydrodipicolinate (HTPA) to tetrahydrodipicolinate. In Rickettsia bellii (strain OSU 85-389), this protein is 4-hydroxy-tetrahydrodipicolinate reductase.